The following is a 556-amino-acid chain: 2-isopropylmalate synthase (556 aa).

Residues 33–307 form the Pyruvate carboxyltransferase domain; sequence PIWCSSDLRD…HPQLDFSDID (275 aa). Mg(2+)-binding residues include Asp42, His246, His248, and Asn282. Positions 439 to 556 are regulatory domain; that stretch reads ATSPYVLASH…AVTQAEAKAA (118 aa).

The protein belongs to the alpha-IPM synthase/homocitrate synthase family. LeuA type 2 subfamily. Homodimer. It depends on Mg(2+) as a cofactor.

Its subcellular location is the cytoplasm. It catalyses the reaction 3-methyl-2-oxobutanoate + acetyl-CoA + H2O = (2S)-2-isopropylmalate + CoA + H(+). It participates in amino-acid biosynthesis; L-leucine biosynthesis; L-leucine from 3-methyl-2-oxobutanoate: step 1/4. In terms of biological role, catalyzes the condensation of the acetyl group of acetyl-CoA with 3-methyl-2-oxobutanoate (2-ketoisovalerate) to form 3-carboxy-3-hydroxy-4-methylpentanoate (2-isopropylmalate). The protein is 2-isopropylmalate synthase of Pseudomonas aeruginosa (strain ATCC 15692 / DSM 22644 / CIP 104116 / JCM 14847 / LMG 12228 / 1C / PRS 101 / PAO1).